A 905-amino-acid chain; its full sequence is Protein translocase subunit SecA (905 aa).

Residues Gln87, 105–109 (GEGKT), and Asp512 contribute to the ATP site. The disordered stretch occupies residues 836–905 (DVDAVDEQRK…KKYKHCHGKL (70 aa)). Residues 841–858 (DEQRKAADSAPREFRHEQ) show a composition bias toward basic and acidic residues. Residues Cys890, Cys892, Cys901, and His902 each coordinate Zn(2+). Over residues 896 to 905 (KKYKHCHGKL) the composition is skewed to basic residues.

The protein belongs to the SecA family. In terms of assembly, monomer and homodimer. Part of the essential Sec protein translocation apparatus which comprises SecA, SecYEG and auxiliary proteins SecDF-YajC and YidC. It depends on Zn(2+) as a cofactor.

Its subcellular location is the cell inner membrane. The protein localises to the cytoplasm. The catalysed reaction is ATP + H2O + cellular proteinSide 1 = ADP + phosphate + cellular proteinSide 2.. Part of the Sec protein translocase complex. Interacts with the SecYEG preprotein conducting channel. Has a central role in coupling the hydrolysis of ATP to the transfer of proteins into and across the cell membrane, serving both as a receptor for the preprotein-SecB complex and as an ATP-driven molecular motor driving the stepwise translocation of polypeptide chains across the membrane. This chain is Protein translocase subunit SecA, found in Idiomarina loihiensis (strain ATCC BAA-735 / DSM 15497 / L2-TR).